We begin with the raw amino-acid sequence, 276 residues long: Potassium/proton antiporter CemA (276 aa).

Transmembrane regions (helical) follow at residues 59–79, 199–219, and 236–256; these read LLLL…WIFG, FFII…GWEV, and FIFL…KYWI.

The protein belongs to the CemA family.

It localises to the plastid. The protein resides in the chloroplast inner membrane. The enzyme catalyses K(+)(in) + H(+)(out) = K(+)(out) + H(+)(in). Functionally, contributes to K(+)/H(+) antiport activity by supporting proton efflux to control proton extrusion and homeostasis in chloroplasts in a light-dependent manner to modulate photosynthesis. Prevents excessive induction of non-photochemical quenching (NPQ) under continuous-light conditions. Indirectly promotes efficient inorganic carbon uptake into chloroplasts. The sequence is that of Potassium/proton antiporter CemA from Cyanidioschyzon merolae (strain NIES-3377 / 10D) (Unicellular red alga).